A 427-amino-acid polypeptide reads, in one-letter code: MTLLEKAKCGEITAEMQYVAEKEGVRPEFICEGVANGDIVILYSSRENIHPVAVGKGLLTKVSASVGMYEEADTVDGEMAKIDAAVKAHADTIMDLSVRGPIEEMREKVLSTVDRPVGTLPMYETLSVAEAKYGTALDMTPDDMFDMIEKQASQGVAFIAVHPGTTLSVIHRAKDEGRIDPLVSYGGSHLIGWMLYNNTENPLYTEFDRLIEICKKYDVVLSFADGMRPGCIADSLDHAQVEELVILGGLVRRAREAGVQVMVKGPGHVPLDEIATTVQLEKKLCYGAPYFVFGCLPTDAAAGYDHITSAIGGAVAAYAGADFLCYVTPAEHIGMPNVDDVYQGVMASRIAAHAGDVAKGHPQAVKWDLDMSVARRAMNWKEQFKLSIDPETAERVWRERSTSFTSECTMCGKYCAMKIVEKYLRAE.

Belongs to the ThiC family. 5-hydroxybenzimidazole synthase subfamily. Requires [4Fe-4S] cluster as cofactor.

It carries out the reaction 5-amino-1-(5-phospho-beta-D-ribosyl)imidazole + AH2 + S-adenosyl-L-methionine = 5-hydroxybenzimidazole + 5'-deoxyadenosine + formate + L-methionine + A + NH4(+) + phosphate + 2 H(+). The protein operates within cofactor biosynthesis; adenosylcobalamin biosynthesis. Together with BzaB, catalyzes the conversion of aminoimidazole ribotide (AIR) to 5-hydroxybenzimidazole (5-HBI) in a radical S-adenosyl-L-methionine (SAM)-dependent reaction. Is thus involved in the anaerobic biosynthesis of dimethylbenzimidazole (DMB), the lower axial ligand of vitamin B12 (cobalamin). Requires BzaB for catalytic activity, as BzaA alone displays no activity. The chain is 5-hydroxybenzimidazole synthase BzaA from Eubacterium limosum.